The following is a 373-amino-acid chain: MTVAALNKLSALSGSIQKSFSPKLISVGIIGSGNWGTAIAKICGENAKAHPDIFHPQVHMWMYEEKIQHEGKECNLTEVFNTTHENVKYLKGIKCPSNVFANPDIRDVGSRSDILVWVLPHQFVVRICNQLKGCLKKDAVAISCIKGVSVTKDRVRLFSDIIEENTGMYCGVLSGANIASEVAQEKFCETTIGYLPNSSVNPRYTPKTIQALFNRPYFRVNIVEDVPGVALGGALKNIVAVAAGIIDGLELGDNTKSAVMRIGLLEMQKFGRMFFDCKPLTMSEESCGIADLITTCLGGRNHKCAVAFVKTGKPMHVVEQELLDGQKLQGAATAKEVYEFLDNQNKVSEFPLFTAVYRIVYEGLPPNKLLEAI.

Position 15 is a phosphoserine (Ser-15). NAD(+) contacts are provided by residues 31 to 36 (GSGNWG), Phe-123, Lys-146, and Ala-179. Substrate is bound at residue Lys-146. Lys-236 acts as the Proton acceptor in catalysis. Arg-300 and Gln-329 together coordinate NAD(+). Residue 300–301 (RN) coordinates substrate.

Belongs to the NAD-dependent glycerol-3-phosphate dehydrogenase family.

It localises to the cytoplasm. The catalysed reaction is sn-glycerol 3-phosphate + NAD(+) = dihydroxyacetone phosphate + NADH + H(+). The polypeptide is Glycerol-3-phosphate dehydrogenase [NAD(+)] 2 (gpd2) (Schizosaccharomyces pombe (strain 972 / ATCC 24843) (Fission yeast)).